Reading from the N-terminus, the 292-residue chain is G1/S-specific cyclin-D3 (292 aa).

Positions 27-152 (VLQSLLRLEE…LVLGKLKWDL (126 aa)) constitute a Cyclin N-terminal domain. The interval 254-292 (SLREASQTSSSPAPKAPRGSSSQGPSQTSTPTDVTAIHL) is disordered. Residues Ser264 and Ser279 each carry the phosphoserine modification. The span at 272–285 (GSSSQGPSQTSTPT) shows a compositional bias: low complexity. Position 283 is a phosphothreonine (Thr283).

Belongs to the cyclin family. Cyclin D subfamily. In terms of assembly, interacts with the CDK4 and CDK6 protein kinases to form a serine/threonine kinase holoenzyme complex. The cyclin subunit imparts substrate specificity to the complex. Interacts with ATF5. Interacts with EIF3K. Component of the ternary complex cyclin D/CDK4/CDKN1B required for nuclear translocation and modulation of CDK4-mediated kinase activity. Can form similar complexes with either CDKN1A or CDKN2A. Post-translationally, phosphorylation at Thr-283 by MAP kinases is required for ubiquitination and degradation by the DCX(AMBRA1) complex. Ubiquitinated by the DCX(AMBRA1) complex during the transition from G1 to S cell phase, leading to its degradation: ubiquitination is dependent on Thr-283 phosphorylation. The DCX(AMBRA1) complex represents the major regulator of CCND3 stability during the G1/S transition. Polyubiquitinated by the SCF(FBXL2) complex, leading to proteasomal degradation.

The protein localises to the nucleus. It localises to the cytoplasm. Functionally, regulatory component of the cyclin D3-CDK4 (DC) complex that phosphorylates and inhibits members of the retinoblastoma (RB) protein family including RB1 and regulates the cell-cycle during G(1)/S transition. Phosphorylation of RB1 allows dissociation of the transcription factor E2F from the RB/E2F complex and the subsequent transcription of E2F target genes which are responsible for the progression through the G(1) phase. Hypophosphorylates RB1 in early G(1) phase. Cyclin D-CDK4 complexes are major integrators of various mitogenenic and antimitogenic signals. Component of the ternary complex, cyclin D3/CDK4/CDKN1B, required for nuclear translocation and activity of the cyclin D-CDK4 complex. Shows transcriptional coactivator activity with ATF5 independently of CDK4. The protein is G1/S-specific cyclin-D3 of Homo sapiens (Human).